The chain runs to 473 residues: NAC domain-containing protein 68 (473 aa).

Residues 4–154 (GLIGYRFSPT…KYVVCQVKYK (151 aa)) form the NAC domain. A DNA-binding region spans residues 108–160 (IGIKKTLVYHEGKSPHGVRTPWVMHEYHITCLPHHKRKYVVCQVKYKGEAAEI). The interval 326–380 (DHMPRKPVTGTIDYSSDSGSDAGSISTTSYQGTSSPNISVGSSSRHLSSCSSTDS) is disordered. Composition is skewed to low complexity over residues 340-354 (SSDS…STTS) and 364-379 (SVGS…SSTD). The chain crosses the membrane as a helical span at residues 446 to 468 (FIYLMKMIIGNIISVLLPVKRLI).

The protein localises to the membrane. Its subcellular location is the nucleus. Transcription activator activated by proteolytic cleavage through regulated intramembrane proteolysis (RIP) mediated by calpain or its functional homolog. Regulates cytokinin signaling during cell division. The chain is NAC domain-containing protein 68 (NAC68) from Arabidopsis thaliana (Mouse-ear cress).